A 281-amino-acid chain; its full sequence is 4-diphosphocytidyl-2-C-methyl-D-erythritol kinase (281 aa).

Lys-15 is an active-site residue. 98–108 (PTGAGLGGGSS) serves as a coordination point for ATP. Residue Asp-140 is part of the active site.

The protein belongs to the GHMP kinase family. IspE subfamily.

The enzyme catalyses 4-CDP-2-C-methyl-D-erythritol + ATP = 4-CDP-2-C-methyl-D-erythritol 2-phosphate + ADP + H(+). Its pathway is isoprenoid biosynthesis; isopentenyl diphosphate biosynthesis via DXP pathway; isopentenyl diphosphate from 1-deoxy-D-xylulose 5-phosphate: step 3/6. Functionally, catalyzes the phosphorylation of the position 2 hydroxy group of 4-diphosphocytidyl-2C-methyl-D-erythritol. The chain is 4-diphosphocytidyl-2-C-methyl-D-erythritol kinase from Neisseria gonorrhoeae (strain ATCC 700825 / FA 1090).